Reading from the N-terminus, the 214-residue chain is Coiled-coil domain-containing protein 169 (214 aa).

Residues 29–154 are a coiled coil; that stretch reads DAVQLSIFEL…NERRTYLAEM (126 aa). Over residues 155–170 the composition is skewed to polar residues; it reads SQGSGLHQVSKRQQVD. The interval 155–214 is disordered; it reads SQGSGLHQVSKRQQVDQLPRMQENLVKTGRYNPAKQKTVSAKRGPVKKITRPNHLPELHP.

The protein belongs to the CCDC169 family.

This chain is Coiled-coil domain-containing protein 169 (CCDC169), found in Homo sapiens (Human).